Here is a 237-residue protein sequence, read N- to C-terminus: Large ribosomal subunit protein uL1 (237 aa).

This sequence belongs to the universal ribosomal protein uL1 family. In terms of assembly, part of the 50S ribosomal subunit.

Binds directly to 23S rRNA. The L1 stalk is quite mobile in the ribosome, and is involved in E site tRNA release. In terms of biological role, protein L1 is also a translational repressor protein, it controls the translation of the L11 operon by binding to its mRNA. This is Large ribosomal subunit protein uL1 from Dehalococcoides mccartyi (strain CBDB1).